A 451-amino-acid polypeptide reads, in one-letter code: Molybdate-anion transporter (451 aa).

12 helical membrane passes run M1–F21, Y45–L65, I79–P99, F130–F150, N180–L200, G201–I221, V251–L271, A281–Y301, V316–A336, L346–L366, G378–L398, and M410–T430.

This sequence belongs to the major facilitator superfamily.

The protein localises to the cell membrane. Mediates high-affinity intracellular uptake of the rare oligo-element molybdenum. This is Molybdate-anion transporter (mfsd5) from Xenopus laevis (African clawed frog).